The chain runs to 33 residues: Zinc metalloproteinase-disintegrin-like moojenin (33 aa).

The region spanning 8–33 (PPVCGNELLEVGEECDCGTPENCQNE) is the Disintegrin domain. Residues Val10, Asn13, Leu15, Glu17, Glu20, and Asp23 each coordinate Ca(2+). Cystine bridges form between Cys11-Cys30 and Cys24-Cys30.

It belongs to the venom metalloproteinase (M12B) family. P-III subfamily. P-IIIb sub-subfamily. As to quaternary structure, monomer. Zn(2+) serves as cofactor. The N-terminus (from the N-terminal region of the metalloproteinase domain) is blocked. In terms of tissue distribution, expressed by the venom gland.

The protein resides in the secreted. Its activity is regulated as follows. The fibrinogenolytic and coagulant activities of the moojenin were abolished by preincubation with EDTA, 1,10-phenanthroline and beta-mercaptoethanol. Metalloproteinase moojenin: snake venom metalloproteinase that cleaves both alpha- and beta-chains of fibrinogen, but not the gamma-chain. Shows a coagulant activity on bovine plasma about 3.1 fold lower than crude venom. Renders the blood incoagulable when intraperitoneally administered into mice. Induces necrosis in liver and muscle, but does not cause histological alterations in mouse lungs, kidney or heart. This chain is Zinc metalloproteinase-disintegrin-like moojenin, found in Bothrops moojeni (Lance-headed viper).